A 397-amino-acid polypeptide reads, in one-letter code: MAKGSAGDAPNTRDTSFKRPKIRESCTHCSSQKIRCTKERPACARCVNKGLLCQYNISRRTGTRRHSVRATPEPETTISNAPTSSVPPDSVKIDGKQSPAMSDFALLDGLETFNNSLWHQPITTDIQDIDMQYFDFFDPGGYQAEPEPINSFDIDSTLLCGTSTAGYLPELDAEASTRPSSSSSPPSQRSDGGRATTHGGGGCISTALQIFSELHVSSSACPIAAGAPSHNIREFDHVLDSNRAALEKLSSILDCPPCCHDQEVLTALFLAVQKALSWYSAALDVAGDGEPTSPSSRVKSPPAFLGSYALGAQAQTLARAYVVMAQLQQHFQPLLAKLQRKSSLSALGARSSSTTSLSSVSSLQSSTSGSAVIECQKRALQEALEDVVAKIEGIKRG.

The zn(2)-C6 fungal-type DNA-binding region spans 26-53; sequence CTHCSSQKIRCTKERPACARCVNKGLLC. 2 disordered regions span residues 62-92 and 173-198; these read GTRRHSVRATPEPETTISNAPTSSVPPDSVK and AEASTRPSSSSSPPSQRSDGGRATTH. Positions 74-87 are enriched in polar residues; sequence PETTISNAPTSSVP. A compositionally biased stretch (low complexity) spans 179 to 197; that stretch reads PSSSSSPPSQRSDGGRATT.

Its subcellular location is the nucleus. In terms of biological role, transcription regulator of the gene cluster that mediates the biosynthesis of cercosporin, a light-activated, non-host-selective toxin. The perylenequinone chromophore of cercosporin absorbs light energy to attain an electronically-activated triplet state and produces active oxygen species such as the hydroxyl radical, superoxide, hydrogen peroxide or singlet oxygen upon reaction with oxygen molecules. These reactive oxygen species cause damage to various cellular components including lipids, proteins and nucleic acids. In Cercospora nicotianae (Barn spot disease fungus), this protein is Cercosporin biosynthesis regulatory protein CTB8.